Consider the following 4576-residue polypeptide: Mucin-2 (4576 aa).

The first 20 residues, 1-20 (MGLPLARLVAACLVLALAKG), serve as a signal peptide directing secretion. Residue S21 is modified to Phosphoserine. The region spanning 32–205 (HVCSTWGDFH…KINKPEVQCE (174 aa)) is the VWFD 1 domain. 29 disulfides stabilise this stretch: C34–C166, C56–C204, C64–C163, C216–C253, C223–C248, C235–C273, C255–C261, C263–C289, C293–C327, C306–C319, C310–C349, C329–C343, C351–C373, C368–C385, C371–C380, C389–C526, C411–C561, C433–C441, C572–C617, C586–C612, C599–C637, C619–C625, C627–C652, C659–C696, C672–C686, C676–C716, C698–C710, C718–C740, and C738–C747. D46 is a binding site for Ca(2+). Cu(+) is bound by residues M143 and M151. E153 serves as a coordination point for Cu(2+). An N-linked (GlcNAc...) asparagine glycan is attached at N160. Ca(2+)-binding residues include D168, N170, and E177. Residue H275 participates in Cu(2+) binding. The 57-residue stretch at 293-349 (CPNNMVYLESSSPCVDTCSHLEVSSLCEEHYMDGCFCPEGTVYDDITGSGCIPVSQC) folds into the TIL domain. Residue H322 coordinates Cu(2+). M324 lines the Cu(+) pocket. The region spanning 387 to 562 (ETCALEGGSH…NTWKAQSSCH (176 aa)) is the VWFD 2 domain. D401 is a binding site for Ca(2+). N421 is a glycosylation site (N-linked (GlcNAc...) asparagine). Ca(2+) contacts are provided by N528, N530, L532, D535, and D536. N668 is a glycosylation site (N-linked (GlcNAc...) asparagine). N768 carries N-linked (GlcNAc...) asparagine glycosylation. Cystine bridges form between C782–C818, C800–C812, C820–C843, C837–C855, C841–C850, C859–C990, C881–C1025, C890–C987, C907–C914, C1035–C1078, C1049–C1073, C1060–C1100, C1080–C1088, C1090–C1115, C1106–C1135, C1119–C1161, C1143–C1185, C1165–C1179, C1187–C1211, C1206–C1236, and C1209–C1219. Residue N838 is glycosylated (N-linked (GlcNAc...) asparagine). The region spanning 857–1026 (STCSIYGSGH…NSWKEASTCP (170 aa)) is the VWFD 3 domain. Ca(2+) is bound at residue D871. N-linked (GlcNAc...) asparagine glycosylation is present at N893. The Ca(2+) site is built by N992, D994, N999, and D1000. Residues N1137 and N1152 are each glycosylated (N-linked (GlcNAc...) asparagine). N1213, N1228, and N1244 each carry an N-linked (GlcNAc...) asparagine glycan. T1265, T1268, T1269, T1281, and T1292 each carry an O-linked (GalNAc) threonine glycan. The Ca(2+) site is built by N1305, H1308, G1315, D1316, and E1318. Residue N1352 is glycosylated (N-linked (GlcNAc...) asparagine). Ca(2+)-binding residues include D1375 and Y1376. 5 repeat units span residues 1395–1415 (SPTTSTTTLSTTPPTSSPTTL), 1416–1427 (PTSSPVTSSATL), 1428–1437 (PTTSSITSTI), 1438–1453 (SPTTSPTTPLTTSPTT), and 1454–1460 (SPTTSPT). The tract at residues 1395 to 2866 (SPTTSTTTLS…PTTSSTFTTP (1472 aa)) is disordered. Residues 1478 to 1497 (PSTTSPTTPSTTPSTTSPTT) form a 7B repeat. Residues 1498–1510 (PSTTSPTTPTSTS) form an 8A repeat. A 9B repeat occupies 1530–1556 (SPTTSPTTPSTTSPTISTTTSTISPTT). The stretch at 1557–1572 (PSTTSPNTPSTTSSTI) is one 10A repeat. Residues 1573-1588 (PSTTSPTTPSTTSPTI) form a 10B repeat. Residues 1589–1607 (STTTSTTSPTTPSTTSPTT) form an 11A repeat. One copy of the 11B repeat lies at 1608–1634 (PSTTSPTTPSTTSPTISTTTLTTSPTT). 2 tandem repeats follow at residues 1635–1642 (PSTTSPTT) and 1665–1681 (ISPTTPSTTSPTTLSTT). N-linked (GlcNAc...) asparagine glycosylation is found at N2529 and N2910. Composition is skewed to low complexity over residues 2975–3623 (PSST…GSTP) and 3631–3706 (PGPT…TSPS). A disordered region spans residues 2975-3706 (PSSTTTETPT…SSTSPITSPS (732 aa)). 3 N-linked (GlcNAc...) asparagine glycosylation sites follow: N3734, N3745, and N3756. The segment covering 3764–3774 (STPTPSTPTPT) has biased composition (pro residues). The disordered stretch occupies residues 3764–3806 (STPTPSTPTPTPSQTTTPSTTSSKSTPSTPQSTSPKSTLSTPT). Residues 3775-3806 (PSQTTTPSTTSSKSTPSTPQSTSPKSTLSTPT) show a composition bias toward low complexity. Residues N3823, N3830, and N3903 are each glycosylated (N-linked (GlcNAc...) asparagine). The VWFD 4 domain maps to 3880-4063 (CYCTGWGDPH…VNDPSKPHCP (184 aa)). Cystine bridges form between C3882–C4023, C3904–C4062, and C3928–C3936. 13 N-linked (GlcNAc...) asparagine glycosylation sites follow: N3991, N4017, N4028, N4083, N4149, N4183, N4254, N4277, N4351, N4366, N4434, N4465, and N4488. VWFC domains lie at 4213 to 4282 (CVGP…TSCK) and 4320 to 4387 (GVCV…KKCQ). 4 cysteine pairs are disulfide-bonded: C4471–C4518, C4485–C4532, C4494–C4548, and C4498–C4550. The CTCK domain occupies 4471–4556 (CSAVSVMKEI…SCLCQDTVCG (86 aa)).

In terms of assembly, homomultimer; disulfide-linked. The N- and C-terminus mediate their assembly into higher order structures to form filaments. The CTCK domains of two polypeptides associate in the endoplasmic reticulum to generate intermolecularly disulfide-bonded dimers. These dimers progress to the Golgi apparatus, which is a more acidic environment than the endoplasmic reticulum. Under acidic conditions, the N-termini form non-covalent intermolecular interactions that juxtapose assemblies of the third VWD domain (VWD3) from different CTCK-linked dimers. The VWD3 assemblies then become disulfide bonded to one another to produce long, disulfide-linked polymers that remain highly compact until secretion. Interacts with FCGBP. Interacts with AGR2; disulfide-linked. Post-translationally, O-glycosylated. O-glycosylation is required for mucin assembly. Goblet cells synthesize two forms of mucin that differ in branched chain O-glycosylation and the site of production in the colon. In terms of processing, may undergo proteolytic cleavage in the outer mucus layer of the colon, contributing to the expanded volume and loose nature of this layer which allows for bacterial colonization in contrast to the inner mucus layer which is dense and devoid of bacteria. At low pH of 6 and under, undergoes autocatalytic cleavage in vitro in the N-terminal region of the fourth VWD domain. It is likely that this also occurs in vivo and is triggered by the low pH of the late secretory pathway. As to expression, highly expressed in goblet cells of the colon with lower levels in the small intestine and no expression in the stomach (at protein level).

It is found in the secreted. Coats the epithelia of the intestines and other mucus membrane-containing organs to provide a protective, lubricating barrier against particles and infectious agents at mucosal surfaces. Major constituent of the colon mucus, which is mainly formed by large polymeric networks of MUC2 secreted by goblet cells that cover the exposed surfaces of intestine. MUC2 networks form hydrogels that guard the underlying epithelium from pathogens and other hazardous matter entering from the outside world, while permitting nutrient absorption and gas exchange. Acts as a divalent copper chaperone that protects intestinal cells from copper toxicity and facilitates nutritional copper unptake into cells. Binds both Cu(2+) and its reduced form, Cu(1+), at two juxtaposed binding sites: Cu(2+), once reduced to Cu(1+) by vitamin C (ascorbate) or other dietary antioxidants, transits to the other binding site. MUC2-bound Cu(1+) is protected from oxidation in aerobic environments, and can be released for nutritional delivery to cells. Mucin gels store antimicrobial molecules that participate in innate immunity. Mucin glycoproteins also house and feed the microbiome, lubricate tissue surfaces, and may facilitate the removal of contaminants and waste products from the body. Goblet cells synthesize two forms of MUC2 mucin that differ in branched chain O-glycosylation and the site of production in the colon: a (1) 'thick' mucus that wraps the microbiota to form fecal pellets is produced in the proximal, ascending colon. 'Thick' mucus transits along the descending colon and is lubricated by a (2) 'thin' MUC2 mucus produced in the distal colon which adheres to the 'thick' mucus. This chain is Mucin-2, found in Mus musculus (Mouse).